The chain runs to 551 residues: Scaffold protein OPG125 (551 aa).

This sequence belongs to the orthopoxvirus protein OPG125 family. Homotrimer. Self-assembles to form a layer. Interacts with OPG158 (via N-terminus); this interaction is necessary for OPG125 association with membranes.

Its subcellular location is the membrane. In terms of biological role, scaffold protein which forms a transitory spherical honeycomb lattice providing curvature and rigidity to the convex membrane of crescent and immature virions (IV). This association occurs concomitantly with viral membrane formation. Targeted by the drug rifampicin, which prevents the formation of this lattice, and hence virus morphogenesis. In the presence of rifampicin, irregularly shaped membranes that lack the honeycomb layer accumulate around areas of electron-dense viroplasm. This layer is lost from virions during maturation from IV to mature virion (MV), through the proteolysis of OPG158 N-terminus. The polypeptide is Scaffold protein OPG125 (OPG125) (Homo sapiens (Human)).